The sequence spans 386 residues: Protein phosphatase methylesterase 1 (386 aa).

Positions 1–38 (MSALEKSMHLGRLPSRPPLPGSGGSQSGAKMRMGPGRK) are disordered. A Phosphoserine modification is found at Ser15. Asymmetric dimethylarginine; alternate is present on Arg16. An Omega-N-methylarginine; alternate modification is found at Arg16. Ser156 is a catalytic residue. Residues 255–265 (IEEEEEDEEGS) show a composition bias toward acidic residues. Positions 255–280 (IEEEEEDEEGSESVNKRKKEDDMETK) are disordered. A compositionally biased stretch (basic and acidic residues) spans 268-280 (VNKRKKEDDMETK). His349 is an active-site residue.

Belongs to the AB hydrolase superfamily. Binds PPP2CA and PPP2CB. Post-translationally, phosphorylated by SIK1 following increases in intracellular sodium, leading to dissociation from the protein phosphatase 2A (PP2A) complex and subsequent dephosphorylation of sodium/potassium-transporting ATPase ATP1A1.

The catalysed reaction is [phosphatase 2A protein]-C-terminal L-leucine methyl ester + H2O = [phosphatase 2A protein]-C-terminal L-leucine + methanol + H(+). In terms of biological role, demethylates proteins that have been reversibly carboxymethylated. Demethylates PPP2CB (in vitro) and PPP2CA. Binding to PPP2CA displaces the manganese ion and inactivates the enzyme. This is Protein phosphatase methylesterase 1 (Ppme1) from Rattus norvegicus (Rat).